The following is a 1238-amino-acid chain: Multifunctional 2-oxoglutarate metabolism enzyme (1238 aa).

A 2-oxoglutarate dehydrogenase E1, N-terminal part region spans residues 1 to 41; it reads MANISSPFGQNEWLVEEMYRKFRDDPSSVDPSWHEFLVDYN. The segment at 42 to 97 is linker; sequence PESTAEPVLTDPTSTDKQPSATPQAKPAAAADPVASRAKPATTPTVANGTAAGSAA. The interval 44–108 is disordered; sequence STAEPVLTDP…PAKTTTTPPI (65 aa). Residues 59-107 show a composition bias toward low complexity; the sequence is QPSATPQAKPAAAADPVASRAKPATTPTVANGTAAGSAAAPAKTTTTPP. The tract at residues 98–346 is succinyltransferase E2; that stretch reads APAKTTTTPP…LRTIHEMVLS (249 aa). The Proton acceptor; for succinyltransferase activity role is filled by H325. The interval 347–1238 is 2-oxoglutarate dehydrogenase E1, C-terminal part; the sequence is DSFWDEIFRE…QQEILDTAFG (892 aa). Residue R551 participates in thiamine diphosphate binding. 2-oxoglutarate is bound by residues H590 and S615. S615, L617, D657, A658, A659, and N690 together coordinate thiamine diphosphate. D657 is a binding site for Mg(2+). Mg(2+) contacts are provided by N690 and I692. Positions 795-825 form a coiled coil; the sequence is DISLKEAEDALRDYQGQLERVFNEVRDLEKH. H1032 contributes to the 2-oxoglutarate binding site. Acetyl-CoA contacts are provided by T1050, R1066, K1101, S1104, Q1154, R1161, and R1162.

The protein belongs to the 2-oxoacid dehydrogenase family. Kgd subfamily. In terms of assembly, homodimer. The 2-oxoglutarate dehydrogenase (ODH) complex contains multiple copies of three enzymatic components: 2-oxoglutarate dehydrogenase (E1), dihydrolipoamide succinyltransferase (E2) and lipoamide dehydrogenase (E3). Requires Mg(2+) as cofactor. The cofactor is thiamine diphosphate.

It catalyses the reaction glyoxylate + 2-oxoglutarate + H(+) = 2-hydroxy-3-oxoadipate + CO2. The catalysed reaction is 2-oxoglutarate + H(+) = succinate semialdehyde + CO2. The enzyme catalyses N(6)-[(R)-lipoyl]-L-lysyl-[protein] + 2-oxoglutarate + H(+) = N(6)-[(R)-S(8)-succinyldihydrolipoyl]-L-lysyl-[protein] + CO2. It carries out the reaction N(6)-[(R)-dihydrolipoyl]-L-lysyl-[protein] + succinyl-CoA = N(6)-[(R)-S(8)-succinyldihydrolipoyl]-L-lysyl-[protein] + CoA. It functions in the pathway carbohydrate metabolism; tricarboxylic acid cycle; succinate from 2-oxoglutarate (transferase route): step 1/2. Its pathway is carbohydrate metabolism; tricarboxylic acid cycle; succinyl-CoA from 2-oxoglutarate (dehydrogenase route): step 1/1. Its activity is regulated as follows. Alpha-ketoglutarate dehydrogenase and decarboxylase activities are inhibited by unphosphorylated GarA, and allosterically activated by acetyl-CoA, the main substrate of the TCA cycle. Functionally, shows three enzymatic activities that share a first common step, the attack of thiamine-PP on 2-oxoglutarate (alpha-ketoglutarate, KG), leading to the formation of an enamine-thiamine-PP intermediate upon decarboxylation. Thus, displays KGD activity, catalyzing the decarboxylation from five-carbon 2-oxoglutarate to four-carbon succinate semialdehyde (SSA). Also catalyzes C-C bond formation between the activated aldehyde formed after decarboxylation of alpha-ketoglutarate and the carbonyl of glyoxylate (GLX), to yield 2-hydroxy-3-oxoadipate (HOA), which spontaneously decarboxylates to form 5-hydroxylevulinate (HLA). And is also a component of the 2-oxoglutarate dehydrogenase (ODH) complex, that catalyzes the overall conversion of 2-oxoglutarate to succinyl-CoA and CO(2). The KG decarboxylase and KG dehydrogenase reactions provide two alternative, tightly regulated, pathways connecting the oxidative and reductive branches of the TCA cycle. In Mycobacterium leprae (strain TN), this protein is Multifunctional 2-oxoglutarate metabolism enzyme (kgd).